The primary structure comprises 305 residues: Major fimbrium anchoring subunit FimB (305 aa).

An N-terminal signal peptide occupies residues 1–22 (MNDAKKYIVSVLILLVAGMFGG). Cys-23 is lipidated: N-palmitoyl cysteine. A lipid anchor (S-diacylglycerol cysteine) is attached at Cys-23.

This sequence belongs to the bacteroidetes fimbrillin superfamily. FimB/Mfa2 family. In terms of assembly, fimB is not part of the fimbrium itself, but anchors the fimbrium in the outer membrane. Linear, head-to-tail oligomerization of fimbrial subunits mediates assembly of the fimbrium stalk, while the minor components FimC, FimD and FimE probably form the fimbrium tip. The anchoring subunit FimB limits fimbrium length and is important for solid fimbrium attachment to the outer membrane. In its absence, the major fimbriae become very long and are easily detached from the membrane.

It is found in the cell outer membrane. Functionally, anchoring subunit of the major fimbriae. Regulates fimbrial length. These filamentous pili are attached to the cell surface; they mediate biofilm formation, adhesion onto host cells and onto other bacteria that are part of the oral microbiome. Fimbriae of P.gingivalis are major virulence factors. This Porphyromonas gingivalis (Bacteroides gingivalis) protein is Major fimbrium anchoring subunit FimB.